Reading from the N-terminus, the 149-residue chain is SsrA-binding protein (149 aa).

This sequence belongs to the SmpB family.

It is found in the cytoplasm. Functionally, required for rescue of stalled ribosomes mediated by trans-translation. Binds to transfer-messenger RNA (tmRNA), required for stable association of tmRNA with ribosomes. tmRNA and SmpB together mimic tRNA shape, replacing the anticodon stem-loop with SmpB. tmRNA is encoded by the ssrA gene; the 2 termini fold to resemble tRNA(Ala) and it encodes a 'tag peptide', a short internal open reading frame. During trans-translation Ala-aminoacylated tmRNA acts like a tRNA, entering the A-site of stalled ribosomes, displacing the stalled mRNA. The ribosome then switches to translate the ORF on the tmRNA; the nascent peptide is terminated with the 'tag peptide' encoded by the tmRNA and targeted for degradation. The ribosome is freed to recommence translation, which seems to be the essential function of trans-translation. This Thermosipho africanus (strain TCF52B) protein is SsrA-binding protein.